The sequence spans 491 residues: 3-phosphoinositide-dependent protein kinase 1 (491 aa).

One can recognise a Protein kinase domain in the interval 44-311 (FEFGKIYGVG…YVALKRHPFF (268 aa)). ATP-binding positions include 54–56 (SYS) and Lys-73. The tract at residues 75-119 (MDKKFITKENKTAYVKLERIVLDQLEHPGIIKLYFTFQDTSSLYM) is PIF-pocket. Residues 77-112 (KKFITKENKTAYVKLERIVLDQLEHPGIIKLYFTFQ) are PIF-binding. ATP contacts are provided by residues 122 to 124 (ESC) and Glu-128. The active-site Proton acceptor is Asp-167. ATP is bound at residue Glu-171. Position 177 is a phosphoserine (Ser-177). Asp-185 is a binding site for ATP. The interval 185–222 (DFGSVKPMQDSQITVLPNAASDDKACTFVGTAAYVPPE) is activation loop. Thr-211 carries the phosphothreonine; by autocatalysis modification. Ser-276 and Ser-337 each carry phosphoserine. Residues 321 to 377 (SQTPPKLAPDPASQTASPERDDTHGSPWNLTHIGDSLATQNEGHSAPPTSSESSGSI) form a disordered region. The segment covering 365–376 (SAPPTSSESSGS) has biased composition (low complexity). Ser-382 carries the post-translational modification Phosphoserine. The PH domain occupies 386–491 (FDSRWQQFLE…KKAIETLQNR (106 aa)).

It belongs to the protein kinase superfamily. AGC Ser/Thr protein kinase family. PDPK1 subfamily. As to quaternary structure, interacts with AGC1-5 and AGC1-7. Interacts with the C-terminal PIF domain of the protein kinases D6PK/AGC1-1, OXI1/AGC2-1 and PID. In terms of processing, phosphorylation on Thr-211 in the activation loop is required for full activity. PDK1 itself can autophosphorylate Thr-211, leading to its own activation. In terms of tissue distribution, ubiquitous.

It localises to the cytoplasm. Its subcellular location is the membrane. The catalysed reaction is L-seryl-[protein] + ATP = O-phospho-L-seryl-[protein] + ADP + H(+). It carries out the reaction L-threonyl-[protein] + ATP = O-phospho-L-threonyl-[protein] + ADP + H(+). Activated by phosphatidic acid (PA) and in response to the fungal elicitor xylanase. In terms of biological role, may couple lipid signals to the activation-loop phosphorylation of several protein kinases of the so-called AGC kinase family. Interacts via its pleckstrin homology domain with phosphatidic acid, PtdIns3P and PtdIns(3,4)P2 and to a lesser extent with PtdIns(4,5)P2 and PtdIns4P. May play a general role in signaling processes controlling the pathogen/stress response, polar auxin transport and development. Transphosphorylates the AGC protein kinases OXI1/AGC2-1, PK1/S6K1, PK19/S6K2 and PID resulting in their activation. In Arabidopsis thaliana (Mouse-ear cress), this protein is 3-phosphoinositide-dependent protein kinase 1 (PDPK1).